A 174-amino-acid polypeptide reads, in one-letter code: MNRTEKEQVIGELHEKMAKAKAAIVAEPKGLNVAVVTDLRKKLRDAKIDYRIVKNTLAARAAKGTPVEPVADRFVGPTALVMSYDDVVTPAKLLADFMKDRENFVIRTAIIEGKVVDAKGVQALAKLPGLKELRGQIAAMIAQPATKLARLVGTPGQQLARVVGARHEQLEKQG.

It belongs to the universal ribosomal protein uL10 family. As to quaternary structure, part of the ribosomal stalk of the 50S ribosomal subunit. The N-terminus interacts with L11 and the large rRNA to form the base of the stalk. The C-terminus forms an elongated spine to which L12 dimers bind in a sequential fashion forming a multimeric L10(L12)X complex.

Forms part of the ribosomal stalk, playing a central role in the interaction of the ribosome with GTP-bound translation factors. The protein is Large ribosomal subunit protein uL10 of Anaeromyxobacter dehalogenans (strain 2CP-C).